We begin with the raw amino-acid sequence, 260 residues long: MIITVLHSHVSFYFIILSFLFFHALHLVGSDGATITIVNRCSFTVWPGILSNSGSGDIGTTGFELVPGGSRSFQAPASWSGRFWARTGCNFNSDTGQGTCLTGDCGSNQVECNGAGAKPPATLAEFTIGSGPADPARKQDFYDVSLVDGYNVPMLVEASGGSEGTCLTTGCVTDLNQKCPTELRFGSGSACKSACEAFGSPEYCCSGAYASPTECKPSMYSEIFKSACPRSYSYAFDDATSTFTCTDADYTITFCPSLPR.

The signal sequence occupies residues 1 to 32 (MIITVLHSHVSFYFIILSFLFFHALHLVGSDG). 8 disulfide bridges follow: cysteine 41–cysteine 255, cysteine 89–cysteine 100, cysteine 105–cysteine 112, cysteine 166–cysteine 245, cysteine 171–cysteine 228, cysteine 179–cysteine 191, cysteine 195–cysteine 204, and cysteine 205–cysteine 215.

The protein belongs to the thaumatin family. In terms of tissue distribution, expressed only in roots.

Functionally, involved in local responses of roots to colonization by non-pathogenic plant growth-promoting rhizobacteria (PGPR) fluorescent Pseudomonas spp., but seems to not being required for the establishment of subsequent induced systemic resistance (ISR). This is Thaumatin-like protein 1 from Arabidopsis thaliana (Mouse-ear cress).